Reading from the N-terminus, the 449-residue chain is Gamma-aminobutyric acid receptor subunit delta (449 aa).

The signal sequence occupies residues 1–24 (MDVLGWLLLPLLLLCTQPHHGARA). Residues 25-251 (MNDIGDYVGS…QLRRNRGVYI (227 aa)) are Extracellular-facing. N-linked (GlcNAc...) asparagine glycosylation is found at N103 and N106. Cysteines 164 and 178 form a disulfide. The chain crosses the membrane as a helical span at residues 252–271 (IQSYMPSVLLVAMSWVSFWI). The Cytoplasmic portion of the chain corresponds to 272-275 (SQAA). The chain crosses the membrane as a helical span at residues 276–298 (VPARVSLGITTVLTMTTLMVSAR). Residues 299–308 (SSLPRASAIK) are Extracellular-facing. A helical membrane pass occupies residues 309 to 331 (ALDVYFWICYVFVFAALVEYAFA). Residues 332–423 (HFNADYRKKR…SRLKPIDADT (92 aa)) lie on the Cytoplasmic side of the membrane. Position 390 is a phosphoserine (S390). Residues 424–446 (IDIYARAVFPAAFAAVNIIYWAA) form a helical membrane-spanning segment. The Extracellular segment spans residues 447 to 449 (YTM).

It belongs to the ligand-gated ion channel (TC 1.A.9) family. Gamma-aminobutyric acid receptor (TC 1.A.9.5) subfamily. GABRD sub-subfamily. Heteropentamer, formed by a combination of alpha (GABRA1-6), beta (GABRB1-3), gamma (GABRG1-3), delta (GABRD), epsilon (GABRE), rho (GABRR1-3), pi (GABRP) and theta (GABRQ) chains, each subunit exhibiting distinct physiological and pharmacological properties.

The protein localises to the cell membrane. It carries out the reaction chloride(in) = chloride(out). In terms of biological role, delta subunit of the heteropentameric ligand-gated chloride channel gated by gamma-aminobutyric acid (GABA), a major inhibitory neurotransmitter in the brain. GABA-gated chloride channels, also named GABA(A) receptors (GABAAR), consist of five subunits arranged around a central pore and contain GABA active binding site(s) located at the alpha and beta subunit interface(s). When activated by GABA, GABAARs selectively allow the flow of chloride anions across the cell membrane down their electrochemical gradient. GABAARs containing delta/GABRD subunits are predominantly expressed and located in extrasynaptic or perisynaptic positions on hippocampus and cerebellar granule cells, and contribute to the tonic GABAergic inhibition. GABAAR containing alpha-4-beta-3-delta subunits can simultaneously bind GABA and histamine where histamine binds at the interface of two neighboring beta subunits, which may be involved in the regulation of sleep and wakefulness. This chain is Gamma-aminobutyric acid receptor subunit delta, found in Mus musculus (Mouse).